Reading from the N-terminus, the 433-residue chain is Energy-coupling factor transporter ATP-binding protein EcfA2 (433 aa).

Residues 25 to 389 (VRVKNLYAVY…QHIINSTSIQ (365 aa)) form the ABC transporter domain. 62–69 (GNSGSGKS) lines the ATP pocket.

This sequence belongs to the ABC transporter superfamily. Energy-coupling factor EcfA family. In terms of assembly, forms a stable energy-coupling factor (ECF) transporter complex composed of 2 membrane-embedded substrate-binding proteins (S component), 2 ATP-binding proteins (A component) and 2 transmembrane proteins (T component).

It is found in the cell membrane. ATP-binding (A) component of a common energy-coupling factor (ECF) ABC-transporter complex. Unlike classic ABC transporters this ECF transporter provides the energy necessary to transport a number of different substrates. The chain is Energy-coupling factor transporter ATP-binding protein EcfA2 from Ureaplasma parvum serovar 3 (strain ATCC 700970).